Reading from the N-terminus, the 104-residue chain is Flagellar hook-basal body complex protein FliE (104 aa).

This sequence belongs to the FliE family.

It is found in the bacterial flagellum basal body. This Escherichia coli O139:H28 (strain E24377A / ETEC) protein is Flagellar hook-basal body complex protein FliE.